A 104-amino-acid polypeptide reads, in one-letter code: Iron-sulfur cluster assembly protein CyaY (104 aa).

The protein belongs to the frataxin family.

Involved in iron-sulfur (Fe-S) cluster assembly. May act as a regulator of Fe-S biogenesis. This chain is Iron-sulfur cluster assembly protein CyaY, found in Vibrio campbellii (strain ATCC BAA-1116).